We begin with the raw amino-acid sequence, 239 residues long: Tetraspanin-9 (239 aa).

Residues 1–13 (MARGCLCCVKYMM) are Cytoplasmic-facing. A helical transmembrane segment spans residues 14–34 (FLFNLLFWLSGCGLLGVGIWL). The Extracellular portion of the chain corresponds to 35-55 (SVSQGSFATFSPSFPSLSAAN). Residues 56-76 (LVITLGSVVMVTGFLGCLGAI) traverse the membrane as a helical segment. Over 77–85 (KENKCLLLS) the chain is Cytoplasmic. Residues 86-106 (FFIVLLIILLAELILLILFFV) form a helical membrane-spanning segment. The Extracellular segment spans residues 107-203 (YTEKVSENAK…VEEWLNDNKH (97 aa)). A glycan (N-linked (GlcNAc...) asparagine) is linked at asparagine 180. Residues 204–224 (LLGTIAMCVLVLQLLGMAFSM) form a helical membrane-spanning segment. Residues 225-239 (TLYQQIHRAGKKYDA) are Cytoplasmic-facing.

This sequence belongs to the tetraspanin (TM4SF) family.

It localises to the membrane. This chain is Tetraspanin-9 (tspan9), found in Danio rerio (Zebrafish).